Reading from the N-terminus, the 587-residue chain is Nucleoporin p58/p45 (587 aa).

A run of 5 repeats spans residues Phe-7–Gly-8, Phe-30–Gly-31, Phe-44–Gly-45, Phe-63–Gly-64, and Phe-68–Gly-69. The segment at Phe-7–Gly-567 is 14 X 2 AA repeats of F-G. Residues Thr-196–Pro-236 form a disordered region. The span at Ser-213–Asn-234 shows a compositional bias: basic and acidic residues. 2 coiled-coil regions span residues Glu-244 to Ser-264 and Glu-302 to Thr-369. A Phosphothreonine modification is found at Thr-319. A run of 9 repeats spans residues Phe-476–Gly-477, Phe-480–Gly-481, Phe-501–Gly-502, Phe-507–Gly-508, Phe-517–Gly-518, Phe-519–Gly-520, Phe-533–Gly-534, Phe-556–Gly-557, and Phe-566–Gly-567. Residues Gly-565 to Arg-587 form a disordered region.

It belongs to the NUP58 family. In terms of assembly, component of the p62 complex, a complex at least composed of NUP62, NUP54, and NUP58. Interacts with NUTF2. Interacts with SRP1-alpha and Importin p97 proteins when they are together, but not with SRP1-alpha protein alone. Post-translationally, O-glycosylated.

The protein resides in the nucleus. It localises to the nuclear pore complex. Its subcellular location is the nucleus membrane. Its function is as follows. Component of the nuclear pore complex, a complex required for the trafficking across the nuclear membrane. In Mus musculus (Mouse), this protein is Nucleoporin p58/p45.